Reading from the N-terminus, the 158-residue chain is Disulfide bond formation protein B (158 aa).

Residues 1-7 (MKNSRPV) are Cytoplasmic-facing. Residues 8–24 (LFAVALASLLLLAVALY) form a helical membrane-spanning segment. Residues 25-42 (LQHVENMLPCPLCVIQRY) are Periplasmic-facing. Cys-34 and Cys-37 are disulfide-bonded. Residues 43-57 (AFAAIALICLVTAFR) form a helical membrane-spanning segment. Topologically, residues 58 to 63 (TEVTAR) are cytoplasmic. The helical transmembrane segment at 64–81 (IGAALAALASLAGAGVAG) threads the bilayer. Residues 82–136 (WHIYIKAHPTVSCGIDPLETSLNTIPTAKLLPFLLQADGLCTTEYAPIMGLSIPQ) lie on the Periplasmic side of the membrane. Cys-94 and Cys-122 are joined by a disulfide. The chain crosses the membrane as a helical span at residues 137–155 (WALVWFIVIALFLLHTAFR). At 156–158 (KKS) the chain is on the cytoplasmic side.

This sequence belongs to the DsbB family.

It is found in the cell inner membrane. Required for disulfide bond formation in some periplasmic proteins. Acts by oxidizing the DsbA protein. The protein is Disulfide bond formation protein B of Herminiimonas arsenicoxydans.